Here is a 66-residue protein sequence, read N- to C-terminus: COP-associated protein (66 aa).

Residues methionine 1 to valine 66 enclose the HMA domain. Residues cysteine 12 and cysteine 15 each coordinate Cu cation.

Its function is as follows. Part of a cation-transporting system which is associated with copper export out of the H.pylori cells. This chain is COP-associated protein (copP), found in Helicobacter pylori (strain J99 / ATCC 700824) (Campylobacter pylori J99).